A 203-amino-acid chain; its full sequence is Vexin (203 aa).

Residues 59–70 (HRTDRRDGEGRW) show a composition bias toward basic and acidic residues. A disordered region spans residues 59–101 (HRTDRRDGEGRWSGRFQNPRLQGPHPAKTPARPVGTSEPKSAN).

This sequence belongs to the vexin family.

The protein localises to the cell membrane. It localises to the nucleus. In terms of biological role, required for neurogenesis in the neural plate and retina. Strongly cooperates with neural bHLH factors to promote neurogenesis. The polypeptide is Vexin (Bos taurus (Bovine)).